We begin with the raw amino-acid sequence, 208 residues long: N-(5'-phosphoribosyl)anthranilate isomerase (208 aa).

It belongs to the TrpF family.

It carries out the reaction N-(5-phospho-beta-D-ribosyl)anthranilate = 1-(2-carboxyphenylamino)-1-deoxy-D-ribulose 5-phosphate. It functions in the pathway amino-acid biosynthesis; L-tryptophan biosynthesis; L-tryptophan from chorismate: step 3/5. This Nitrosospira multiformis (strain ATCC 25196 / NCIMB 11849 / C 71) protein is N-(5'-phosphoribosyl)anthranilate isomerase.